Here is a 107-residue protein sequence, read N- to C-terminus: uncharacterized protein (107 aa).

A run of 3 helical transmembrane segments spans residues 16 to 36 (VIPCTLSSPSFVLMAVISESL), 47 to 67 (IISLIESAVTSLSYVTWHSLV), and 85 to 105 (LIVLVQALHVIPCTASITSLI).

It is found in the membrane. This is an uncharacterized protein from Saccharomyces cerevisiae (strain ATCC 204508 / S288c) (Baker's yeast).